A 105-amino-acid chain; its full sequence is DNA-binding protein HU (105 aa).

Belongs to the bacterial histone-like protein family.

Its function is as follows. Histone-like DNA-binding protein which is capable of wrapping DNA to stabilize it, and thus to prevent its denaturation under extreme environmental conditions. In Treponema pallidum (strain Nichols), this protein is DNA-binding protein HU (hup).